We begin with the raw amino-acid sequence, 561 residues long: uncharacterized protein (561 aa).

2 disordered regions span residues 20–42 (IQEQ…GCSP) and 82–283 (QIGS…STPF). The segment covering 103 to 131 (DKISEDTDQERVVVCESLENKSSSKDKSP) has biased composition (basic and acidic residues). Basic residues-rich tracts occupy residues 135-156 (RSPK…KSSK) and 165-185 (KSSK…KRYR). Composition is skewed to basic and acidic residues over residues 192–203 (SLSRDRSSSRDR), 211–247 (YSRD…DRSP), and 259–272 (PLRD…RSVS).

Belongs to the mimivirus L41 family.

This is an uncharacterized protein from Acanthamoeba polyphaga (Amoeba).